The sequence spans 306 residues: Pyridoxal 5'-phosphate synthase subunit PdxS (306 aa).

Residue Asp-36 participates in D-ribose 5-phosphate binding. The active-site Schiff-base intermediate with D-ribose 5-phosphate is the Lys-93. Gly-165 contacts D-ribose 5-phosphate. Arg-177 contributes to the D-glyceraldehyde 3-phosphate binding site. D-ribose 5-phosphate-binding positions include Gly-226 and 247–248; that span reads GS.

This sequence belongs to the PdxS/SNZ family. In the presence of PdxT, forms a dodecamer of heterodimers.

The enzyme catalyses aldehydo-D-ribose 5-phosphate + D-glyceraldehyde 3-phosphate + L-glutamine = pyridoxal 5'-phosphate + L-glutamate + phosphate + 3 H2O + H(+). The protein operates within cofactor biosynthesis; pyridoxal 5'-phosphate biosynthesis. Catalyzes the formation of pyridoxal 5'-phosphate from ribose 5-phosphate (RBP), glyceraldehyde 3-phosphate (G3P) and ammonia. The ammonia is provided by the PdxT subunit. Can also use ribulose 5-phosphate and dihydroxyacetone phosphate as substrates, resulting from enzyme-catalyzed isomerization of RBP and G3P, respectively. In Corynebacterium urealyticum (strain ATCC 43042 / DSM 7109), this protein is Pyridoxal 5'-phosphate synthase subunit PdxS.